The following is a 131-amino-acid chain: MAQIPARGDCSRQLTRKQAGDAWEAAARLWLESKGLRFIAANVRERGGEIDLIMRDGKTTVFVEVRYRRSGLYGGAAASVTRSKQHKLLHTARLWLARQNGSFDTVDCRFDVLAFTGNEIEWFRDAFNDHS.

It belongs to the UPF0102 family.

The chain is UPF0102 protein YraN from Salmonella typhi.